The primary structure comprises 461 residues: Zinc finger protein ZFP2 (461 aa).

C2H2-type zinc fingers lie at residues 102–124 (YECN…QRIH), 130–152 (YKCN…QRIH), 158–180 (YKCN…QRTH), 186–208 (YQCK…ERIH), 214–236 (YKCN…QRTH), 242–264 (YECN…QRSH), 270–292 (YECS…QRNH), 298–320 (YKCN…QRLH), 326–348 (FECN…RRIH), 354–376 (YECM…QVIH), 382–404 (YECN…QRIH), 410–432 (YECD…QRTH), and 438–460 (YQCN…QRTH).

The protein belongs to the krueppel C2H2-type zinc-finger protein family.

The protein localises to the nucleus. Probable transcription factor involved in neuronal differentiation and/or phenotypic maintenance. The protein is Zinc finger protein ZFP2 (ZFP2) of Homo sapiens (Human).